The primary structure comprises 407 residues: Bifunctional enzyme IspD/IspF (407 aa).

The segment at 1–246 (MQPLAEATTI…RQDHVSFPDI (246 aa)) is 2-C-methyl-D-erythritol 4-phosphate cytidylyltransferase. Residues 247-407 (RTGNGYDVHS…TVIYPGEVPE (161 aa)) form a 2-C-methyl-D-erythritol 2,4-cyclodiphosphate synthase region. Positions 253 and 255 each coordinate a divalent metal cation. 4-CDP-2-C-methyl-D-erythritol 2-phosphate-binding positions include 253-255 (DVH) and 279-280 (HS). Histidine 287 provides a ligand contact to a divalent metal cation. Residues 301–303 (DIG), 377–380 (TTNE), phenylalanine 384, and arginine 387 each bind 4-CDP-2-C-methyl-D-erythritol 2-phosphate.

The protein in the N-terminal section; belongs to the IspD/TarI cytidylyltransferase family. IspD subfamily. This sequence in the C-terminal section; belongs to the IspF family. Requires a divalent metal cation as cofactor.

It carries out the reaction 2-C-methyl-D-erythritol 4-phosphate + CTP + H(+) = 4-CDP-2-C-methyl-D-erythritol + diphosphate. The catalysed reaction is 4-CDP-2-C-methyl-D-erythritol 2-phosphate = 2-C-methyl-D-erythritol 2,4-cyclic diphosphate + CMP. Its pathway is isoprenoid biosynthesis; isopentenyl diphosphate biosynthesis via DXP pathway; isopentenyl diphosphate from 1-deoxy-D-xylulose 5-phosphate: step 2/6. It functions in the pathway isoprenoid biosynthesis; isopentenyl diphosphate biosynthesis via DXP pathway; isopentenyl diphosphate from 1-deoxy-D-xylulose 5-phosphate: step 4/6. In terms of biological role, bifunctional enzyme that catalyzes the formation of 4-diphosphocytidyl-2-C-methyl-D-erythritol from CTP and 2-C-methyl-D-erythritol 4-phosphate (MEP) (IspD), and catalyzes the conversion of 4-diphosphocytidyl-2-C-methyl-D-erythritol 2-phosphate (CDP-ME2P) to 2-C-methyl-D-erythritol 2,4-cyclodiphosphate (ME-CPP) with a corresponding release of cytidine 5-monophosphate (CMP) (IspF). The sequence is that of Bifunctional enzyme IspD/IspF from Brucella anthropi (strain ATCC 49188 / DSM 6882 / CCUG 24695 / JCM 21032 / LMG 3331 / NBRC 15819 / NCTC 12168 / Alc 37) (Ochrobactrum anthropi).